A 201-amino-acid chain; its full sequence is Large ribosomal subunit protein uL4 (201 aa).

The interval 39-70 (GRQGTKAQKTRSEVSGGGKKPWRQKGTGRARA) is disordered.

Belongs to the universal ribosomal protein uL4 family. In terms of assembly, part of the 50S ribosomal subunit.

In terms of biological role, one of the primary rRNA binding proteins, this protein initially binds near the 5'-end of the 23S rRNA. It is important during the early stages of 50S assembly. It makes multiple contacts with different domains of the 23S rRNA in the assembled 50S subunit and ribosome. Its function is as follows. Forms part of the polypeptide exit tunnel. In Marinobacter nauticus (strain ATCC 700491 / DSM 11845 / VT8) (Marinobacter aquaeolei), this protein is Large ribosomal subunit protein uL4.